The sequence spans 234 residues: Carboxy-S-adenosyl-L-methionine synthase (234 aa).

Residues Tyr-35, 60–62 (GCS), 83–84 (DN), 109–110 (DI), Asn-124, and Arg-191 contribute to the S-adenosyl-L-methionine site.

The protein belongs to the class I-like SAM-binding methyltransferase superfamily. Cx-SAM synthase family. Homodimer.

It catalyses the reaction prephenate + S-adenosyl-L-methionine = carboxy-S-adenosyl-L-methionine + 3-phenylpyruvate + H2O. In terms of biological role, catalyzes the conversion of S-adenosyl-L-methionine (SAM) to carboxy-S-adenosyl-L-methionine (Cx-SAM). The protein is Carboxy-S-adenosyl-L-methionine synthase of Campylobacter concisus (strain 13826).